We begin with the raw amino-acid sequence, 493 residues long: Reticulophagy regulator 1 (493 aa).

A disordered region spans residues 1-52 (MASPAPPEPAEQGSPALAAAPQAPPPPTRAPPEEPEGAAPPEEGAAAGAGRQ). Residues 1–55 (MASPAPPEPAEQGSPALAAAPQAPPPPTRAPPEEPEGAAPPEEGAAAGAGRQVEE) lie on the Cytoplasmic side of the membrane. Over residues 37–52 (GAAPPEEGAAAGAGRQ) the composition is skewed to low complexity. A helical transmembrane segment spans residues 56–76 (AAGGVAAVVTWLLGEPALWLG). Residues 77–87 (GRADELLSWKR) are Lumenal-facing. The tract at residues 80–229 (DELLSWKRPL…LLCAFLCPLF (150 aa)) is reticulon homology domain. Residues 88–108 (PLHSLLAFVGANLVFWFLALT) traverse the membrane as a helical segment. At 109-114 (PWRVYH) the chain is on the cytoplasmic side. Residues 115–135 (LISVMILTRVIMQIIKDMILS) traverse the membrane as a helical segment. Topologically, residues 136 to 204 (RTRGAQLWRS…LVCSVCTFFT (69 aa)) are lumenal. S145 is subject to Phosphoserine. Phosphoserine; by CAMK2B is present on S147. Position 149 is a phosphoserine (S149). Residues 205 to 225 (ILGSYIPGVILSYLLLLCAFL) traverse the membrane as a helical segment. At 226-493 (CPLFKCNDIG…GFLSNLLGGH (268 aa)) the chain is on the cytoplasmic side. Polar residues predominate over residues 315-326 (FNLSEGYTPQTD). Disordered regions lie at residues 315-394 (FNLS…GLSL) and 435-493 (AAPS…LGGH). The span at 330–344 (DLDRPSEEVFSRDLS) shows a compositional bias: basic and acidic residues. Phosphothreonine is present on T353. Residues 368 to 388 (ELKRKKEQLDGGPRRSTEKKS) are compositionally biased toward basic and acidic residues. Positions 441–463 (EDTDTEEGDDFELLDQSELDQIE) are enriched in acidic residues. Residues 449–454 (DDFELL) carry the LIR motif motif. Residues 467-486 (GLSQDQEAEAQQNKKSSGFL) are compositionally biased toward polar residues.

The protein belongs to the RETREG family. As to quaternary structure, homooligomer; oligomerization is enhanced following endoplasmic reticulum stress and is mediated by the reticulon homology domain. Interacts with ATG8 family modifier proteins MAP1LC3A, MAP1LC3B, GABARAP, GABARAPL1 and GABARAPL2. Phosphorylation at Ser-147 by CAMK2B enhances oligomerization and membrane scission and reticulophagy activity.

It localises to the golgi apparatus. Its subcellular location is the cis-Golgi network membrane. It is found in the endoplasmic reticulum membrane. Functionally, endoplasmic reticulum (ER)-anchored autophagy regulator which mediates ER delivery into lysosomes through sequestration into autophagosomes. Promotes membrane remodeling and ER scission via its membrane bending capacity and targets the fragments into autophagosomes via interaction with ATG8 family proteins. Active under basal conditions. Required for collagen quality control in a LIR motif-dependent manner. Required for long-term survival of nociceptive and autonomic ganglion neurons. This chain is Reticulophagy regulator 1 (RETREG1), found in Bos taurus (Bovine).